Here is a 244-residue protein sequence, read N- to C-terminus: Phosphoadenosine 5'-phosphosulfate reductase (244 aa).

Residue cysteine 239 is the Nucleophile; cysteine thiosulfonate intermediate of the active site.

Belongs to the PAPS reductase family. CysH subfamily.

It is found in the cytoplasm. The catalysed reaction is [thioredoxin]-disulfide + sulfite + adenosine 3',5'-bisphosphate + 2 H(+) = [thioredoxin]-dithiol + 3'-phosphoadenylyl sulfate. It participates in sulfur metabolism; hydrogen sulfide biosynthesis; sulfite from sulfate: step 3/3. Catalyzes the formation of sulfite from phosphoadenosine 5'-phosphosulfate (PAPS) using thioredoxin as an electron donor. This is Phosphoadenosine 5'-phosphosulfate reductase from Cronobacter sakazakii (strain ATCC BAA-894) (Enterobacter sakazakii).